A 122-amino-acid chain; its full sequence is Large ribosomal subunit protein bL12 (122 aa).

This sequence belongs to the bacterial ribosomal protein bL12 family. In terms of assembly, homodimer. Part of the ribosomal stalk of the 50S ribosomal subunit. Forms a multimeric L10(L12)X complex, where L10 forms an elongated spine to which 2 to 4 L12 dimers bind in a sequential fashion. Binds GTP-bound translation factors.

Functionally, forms part of the ribosomal stalk which helps the ribosome interact with GTP-bound translation factors. Is thus essential for accurate translation. The polypeptide is Large ribosomal subunit protein bL12 (Streptococcus thermophilus (strain ATCC BAA-491 / LMD-9)).